Here is a 182-residue protein sequence, read N- to C-terminus: ATP-dependent protease subunit HslV (182 aa).

T10 is an active-site residue. A166, C169, and S172 together coordinate Na(+).

Belongs to the peptidase T1B family. HslV subfamily. As to quaternary structure, a double ring-shaped homohexamer of HslV is capped on each side by a ring-shaped HslU homohexamer. The assembly of the HslU/HslV complex is dependent on binding of ATP.

It is found in the cytoplasm. It catalyses the reaction ATP-dependent cleavage of peptide bonds with broad specificity.. With respect to regulation, allosterically activated by HslU binding. In terms of biological role, protease subunit of a proteasome-like degradation complex believed to be a general protein degrading machinery. This chain is ATP-dependent protease subunit HslV, found in Rickettsia prowazekii (strain Madrid E).